The chain runs to 67 residues: DNA gyrase inhibitor YacG (67 aa).

The Zn(2+) site is built by Cys9, Cys12, Cys28, and Cys32. The tract at residues Arg46–Gln67 is disordered.

The protein belongs to the DNA gyrase inhibitor YacG family. In terms of assembly, interacts with GyrB. Requires Zn(2+) as cofactor.

Inhibits all the catalytic activities of DNA gyrase by preventing its interaction with DNA. Acts by binding directly to the C-terminal domain of GyrB, which probably disrupts DNA binding by the gyrase. This chain is DNA gyrase inhibitor YacG, found in Erwinia tasmaniensis (strain DSM 17950 / CFBP 7177 / CIP 109463 / NCPPB 4357 / Et1/99).